A 212-amino-acid chain; its full sequence is Leucine efflux protein (212 aa).

6 consecutive transmembrane segments (helical) span residues T12 to L32, G49 to I69, T71 to G91, I122 to I142, F153 to I173, and L188 to A208.

Belongs to the Rht family.

The protein localises to the cell inner membrane. It catalyses the reaction L-leucine(in) + H(+)(out) = L-leucine(out) + H(+)(in). Leucine export is inhibited by the proton ionophore carbonyl cyanide m-chlorophenylhydrazone (CCCP). Functionally, exporter of leucine. Can also transport its natural analog L-alpha-amino-n-butyric acid and some other structurally unrelated amino acids. Leucine excretion is probably driven by proton motive force. The protein is Leucine efflux protein of Escherichia coli (strain K12).